A 443-amino-acid chain; its full sequence is MGVFAVTKVSEGPVRPSAATPSETLPLAWVDRYPTHRGLVESVHIYLRRDDAAVEAPCADGGVIVEGKKKNNKPAAAVVRGALADALVHYYPFAGRIVEDERSPGRPAVLCSGEGVYFVEAAANCTLADVNHLERPLLLSKEDLVPCPTPEQWPVEPHNSLAMIQVTTFTCGGFVIGLRTNHAVADGTGAAQFMNAVGDLARGLPEPRVKPIWARDRFPDPDIKPGPLPELPVLPLQYIAFDFPAAYLGKLKAQYAATAGASKICSAFDIVIAKLWQCRTRAIAADPAAAVKLCFFASARQVLGLETGYWGNAIFPVKVSAAAGEVAASSVIELVGVVREAKRRMAGECLRWAEGRTGGADPFQMTFDYESVYVSDWSKLGFNDVDYGYGAPSAAGPLVNCDLISSVIVMRAPAPLAGTRLLASCVTKEHADDFAARMREDLV.

Active-site proton acceptor residues include His-182 and Asp-386.

Belongs to the plant acyltransferase family.

Its function is as follows. Involved in the incorporation of ferulate into the cell wall. May act as arabinoxylan feruloyl transferase. May function as p-coumaroyl-CoA transferase involved in glucuronoarabinoxylan modification. The sequence is that of Acyl transferase 10 from Oryza sativa subsp. japonica (Rice).